A 291-amino-acid chain; its full sequence is ATP synthase gamma chain (291 aa).

It belongs to the ATPase gamma chain family. F-type ATPases have 2 components, CF(1) - the catalytic core - and CF(0) - the membrane proton channel. CF(1) has five subunits: alpha(3), beta(3), gamma(1), delta(1), epsilon(1). CF(0) has three main subunits: a, b and c.

It localises to the cell inner membrane. Its function is as follows. Produces ATP from ADP in the presence of a proton gradient across the membrane. The gamma chain is believed to be important in regulating ATPase activity and the flow of protons through the CF(0) complex. The chain is ATP synthase gamma chain from Roseobacter denitrificans (strain ATCC 33942 / OCh 114) (Erythrobacter sp. (strain OCh 114)).